The following is a 445-amino-acid chain: Phosphoglucosamine mutase 1 (445 aa).

The active-site Phosphoserine intermediate is the S102. Mg(2+)-binding residues include S102, D241, D243, and D245. S102 is subject to Phosphoserine.

It belongs to the phosphohexose mutase family. It depends on Mg(2+) as a cofactor. Activated by phosphorylation.

It catalyses the reaction alpha-D-glucosamine 1-phosphate = D-glucosamine 6-phosphate. Its function is as follows. Catalyzes the conversion of glucosamine-6-phosphate to glucosamine-1-phosphate. The sequence is that of Phosphoglucosamine mutase 1 from Shewanella amazonensis (strain ATCC BAA-1098 / SB2B).